A 63-amino-acid polypeptide reads, in one-letter code: Small integral membrane protein 43 (63 aa).

Important for interaction with SLC2A1 and SLC2A3 stretches follow at residues 7 to 29 (LLLY…FVVI) and 51 to 57 (HREPWGF). The helical transmembrane segment at 9–29 (LYLALFFFLLFLLFLLLFVVI) threads the bilayer.

In terms of assembly, interacts with glucose transporters SLC2A1/GLUT1 and SLC2A3/GLUT3; the interactions may promote SLC2A1- and SLC2A3-mediated glucose transport to meet the energy needs of mesendoderm differentiation.

It localises to the cell membrane. Required for mesendoderm differentiation. Interacts with glucose transporters and promotes glucose uptake. Probably augments the glucose uptake capacity of glucose transporter proteins to meet the energy needs of mesendoderm differentiation. In Homo sapiens (Human), this protein is Small integral membrane protein 43.